The sequence spans 270 residues: tRNA pseudouridine synthase A (270 aa).

Aspartate 54 serves as the catalytic Nucleophile. Tyrosine 112 contacts substrate.

The protein belongs to the tRNA pseudouridine synthase TruA family. Homodimer.

The catalysed reaction is uridine(38/39/40) in tRNA = pseudouridine(38/39/40) in tRNA. In terms of biological role, formation of pseudouridine at positions 38, 39 and 40 in the anticodon stem and loop of transfer RNAs. The chain is tRNA pseudouridine synthase A from Bordetella bronchiseptica (strain ATCC BAA-588 / NCTC 13252 / RB50) (Alcaligenes bronchisepticus).